Here is a 271-residue protein sequence, read N- to C-terminus: Putative phosphoenolpyruvate synthase regulatory protein (271 aa).

An ADP-binding site is contributed by 151-158 (GVSRSGKT).

It belongs to the pyruvate, phosphate/water dikinase regulatory protein family. PSRP subfamily.

It carries out the reaction [pyruvate, water dikinase] + ADP = [pyruvate, water dikinase]-phosphate + AMP + H(+). The catalysed reaction is [pyruvate, water dikinase]-phosphate + phosphate + H(+) = [pyruvate, water dikinase] + diphosphate. Its function is as follows. Bifunctional serine/threonine kinase and phosphorylase involved in the regulation of the phosphoenolpyruvate synthase (PEPS) by catalyzing its phosphorylation/dephosphorylation. This is Putative phosphoenolpyruvate synthase regulatory protein from Burkholderia lata (strain ATCC 17760 / DSM 23089 / LMG 22485 / NCIMB 9086 / R18194 / 383).